The following is a 132-amino-acid chain: Small ribosomal subunit protein uS8 (132 aa).

It belongs to the universal ribosomal protein uS8 family. As to quaternary structure, part of the 30S ribosomal subunit. Contacts proteins S5 and S12.

Functionally, one of the primary rRNA binding proteins, it binds directly to 16S rRNA central domain where it helps coordinate assembly of the platform of the 30S subunit. This chain is Small ribosomal subunit protein uS8, found in Allorhizobium ampelinum (strain ATCC BAA-846 / DSM 112012 / S4) (Agrobacterium vitis (strain S4)).